We begin with the raw amino-acid sequence, 496 residues long: Lysine--tRNA ligase (496 aa).

Positions 409 and 416 each coordinate Mg(2+).

Belongs to the class-II aminoacyl-tRNA synthetase family. Homodimer. Requires Mg(2+) as cofactor.

It localises to the cytoplasm. The catalysed reaction is tRNA(Lys) + L-lysine + ATP = L-lysyl-tRNA(Lys) + AMP + diphosphate. In Streptococcus agalactiae serotype III (strain NEM316), this protein is Lysine--tRNA ligase.